A 162-amino-acid polypeptide reads, in one-letter code: HTH-type transcriptional regulator IscR (162 aa).

The 130-residue stretch at 2–131 (RLTSKGRYAV…NNITLGELVN (130 aa)) folds into the HTH rrf2-type domain. A DNA-binding region (H-T-H motif) is located at residues 28–51 (LADISERQGISLSYLEQLFSRLRK). [2Fe-2S] cluster is bound by residues C92, C98, and C104. The interval 141 to 162 (RQHNEAHRPTRAQDAIDVKLRA) is disordered.

[2Fe-2S] cluster serves as cofactor.

Its function is as follows. Regulates the transcription of several operons and genes involved in the biogenesis of Fe-S clusters and Fe-S-containing proteins. This chain is HTH-type transcriptional regulator IscR, found in Cronobacter sakazakii (strain ATCC BAA-894) (Enterobacter sakazakii).